The chain runs to 261 residues: 4-hydroxy-tetrahydrodipicolinate reductase (261 aa).

Residues 11-16 (GFMGAM), 96-98 (GTT), and 122-125 (APNF) contribute to the NAD(+) site. H152 serves as the catalytic Proton donor/acceptor. H153 provides a ligand contact to (S)-2,3,4,5-tetrahydrodipicolinate. Residue K156 is the Proton donor of the active site. 162–163 (GT) is a (S)-2,3,4,5-tetrahydrodipicolinate binding site.

This sequence belongs to the DapB family.

The protein localises to the cytoplasm. The enzyme catalyses (S)-2,3,4,5-tetrahydrodipicolinate + NAD(+) + H2O = (2S,4S)-4-hydroxy-2,3,4,5-tetrahydrodipicolinate + NADH + H(+). It carries out the reaction (S)-2,3,4,5-tetrahydrodipicolinate + NADP(+) + H2O = (2S,4S)-4-hydroxy-2,3,4,5-tetrahydrodipicolinate + NADPH + H(+). Its pathway is amino-acid biosynthesis; L-lysine biosynthesis via DAP pathway; (S)-tetrahydrodipicolinate from L-aspartate: step 4/4. Its function is as follows. Catalyzes the conversion of 4-hydroxy-tetrahydrodipicolinate (HTPA) to tetrahydrodipicolinate. This is 4-hydroxy-tetrahydrodipicolinate reductase from Lactobacillus helveticus (strain DPC 4571).